The following is a 248-amino-acid chain: 3-deoxy-manno-octulosonate cytidylyltransferase (248 aa).

It belongs to the KdsB family.

The protein resides in the cytoplasm. The catalysed reaction is 3-deoxy-alpha-D-manno-oct-2-ulosonate + CTP = CMP-3-deoxy-beta-D-manno-octulosonate + diphosphate. Its pathway is nucleotide-sugar biosynthesis; CMP-3-deoxy-D-manno-octulosonate biosynthesis; CMP-3-deoxy-D-manno-octulosonate from 3-deoxy-D-manno-octulosonate and CTP: step 1/1. It participates in bacterial outer membrane biogenesis; lipopolysaccharide biosynthesis. Activates KDO (a required 8-carbon sugar) for incorporation into bacterial lipopolysaccharide in Gram-negative bacteria. The polypeptide is 3-deoxy-manno-octulosonate cytidylyltransferase (Salmonella paratyphi A (strain ATCC 9150 / SARB42)).